The chain runs to 126 residues: Large ribosomal subunit protein uL22 (126 aa).

This sequence belongs to the universal ribosomal protein uL22 family. Part of the 50S ribosomal subunit.

Its function is as follows. This protein binds specifically to 23S rRNA; its binding is stimulated by other ribosomal proteins, e.g. L4, L17, and L20. It is important during the early stages of 50S assembly. It makes multiple contacts with different domains of the 23S rRNA in the assembled 50S subunit and ribosome. Functionally, the globular domain of the protein is located near the polypeptide exit tunnel on the outside of the subunit, while an extended beta-hairpin is found that lines the wall of the exit tunnel in the center of the 70S ribosome. This Jannaschia sp. (strain CCS1) protein is Large ribosomal subunit protein uL22.